Here is a 132-residue protein sequence, read N- to C-terminus: uncharacterized protein (132 aa).

3 helical membrane passes run 18-38 (MLFI…FIGI), 50-70 (IIYF…GVFI), and 71-91 (VVPL…LYLI).

It localises to the cell membrane. This is an uncharacterized protein from Bacillus subtilis (strain 168).